Reading from the N-terminus, the 412-residue chain is CinA-like protein (412 aa).

It belongs to the CinA family.

The protein is CinA-like protein of Syntrophotalea carbinolica (strain DSM 2380 / NBRC 103641 / GraBd1) (Pelobacter carbinolicus).